The sequence spans 498 residues: WD repeat-containing protein 55 homolog (498 aa).

The tract at residues methionine 1–threonine 133 is disordered. Composition is skewed to acidic residues over residues aspartate 12 to methionine 23, isoleucine 31 to leucine 48, and serine 83 to aspartate 95. Polar residues predominate over residues proline 114–alanine 123. WD repeat units follow at residues lysine 155–leucine 194, valine 199–leucine 238, alanine 242–glutamate 280, glutamate 283–glutamine 322, proline 325–aspartate 364, and glutamine 409–aspartate 448.

Belongs to the WD repeat WDR55 family.

This is WD repeat-containing protein 55 homolog from Drosophila erecta (Fruit fly).